A 246-amino-acid polypeptide reads, in one-letter code: Ribosomal RNA small subunit methyltransferase J (246 aa).

Residues 115-116 (ER) and aspartate 169 each bind S-adenosyl-L-methionine.

This sequence belongs to the methyltransferase superfamily. RsmJ family.

It is found in the cytoplasm. The catalysed reaction is guanosine(1516) in 16S rRNA + S-adenosyl-L-methionine = N(2)-methylguanosine(1516) in 16S rRNA + S-adenosyl-L-homocysteine + H(+). In terms of biological role, specifically methylates the guanosine in position 1516 of 16S rRNA. In Buchnera aphidicola subsp. Acyrthosiphon pisum (strain 5A), this protein is Ribosomal RNA small subunit methyltransferase J.